Consider the following 174-residue polypeptide: Gamma-crystallin C (174 aa).

2 Beta/gamma crystallin 'Greek key' domains span residues 2–40 (GKITFYEDRGFQGRCYECSSDCPNLQTYFSRCNSIRVDS) and 41–83 (GCWM…RLIP). At cysteine 23 the chain carries S-methylcysteine. A connecting peptide region spans residues 84–87 (HTGS). Beta/gamma crystallin 'Greek key' domains follow at residues 88–128 (HRMR…HVLE) and 129–171 (GCWV…RRVV).

It belongs to the beta/gamma-crystallin family.

Functionally, crystallins are the dominant structural components of the vertebrate eye lens. This chain is Gamma-crystallin C (Crygc), found in Rattus norvegicus (Rat).